The following is a 445-amino-acid chain: CBL-interacting serine/threonine-protein kinase 5 (445 aa).

The region spanning 12–267 is the Protein kinase domain; that stretch reads YEMGRLLGKG…IPAIMRTPWL (256 aa). ATP is bound by residues 18 to 26 and Lys41; that span reads LGKGTFAKV. The active-site Proton acceptor is Asp135. The activation loop stretch occupies residues 153–182; it reads DFGLSALPEQILQDGLLHTQCGTPAYVAPE. Position 157 is a phosphoserine (Ser157). Thr171 bears the Phosphothreonine mark. The NAF domain maps to 307 to 332; the sequence is ISPKFFNAFEFISSMSSGFDLSSLFE. A PPI region spans residues 336–366; the sequence is KVQSVFTSRSSATEVMEKIETVTKEMNMKVK.

This sequence belongs to the protein kinase superfamily. CAMK Ser/Thr protein kinase family. SNF1 subfamily. It depends on Mn(2+) as a cofactor.

The catalysed reaction is L-seryl-[protein] + ATP = O-phospho-L-seryl-[protein] + ADP + H(+). It carries out the reaction L-threonyl-[protein] + ATP = O-phospho-L-threonyl-[protein] + ADP + H(+). In terms of biological role, CIPK serine-threonine protein kinases interact with CBL proteins. Binding of a CBL protein to the regulatory NAF domain of CIPK protein lead to the activation of the kinase in a calcium-dependent manner. In Arabidopsis thaliana (Mouse-ear cress), this protein is CBL-interacting serine/threonine-protein kinase 5 (CIPK5).